A 1248-amino-acid polypeptide reads, in one-letter code: Kinesin-like protein KIN-14I (1248 aa).

The MyTH4 domain maps to 88 to 244 (FQKDPIPTSL…PAREEIEALL (157 aa)). The FERM domain maps to 249–563 (LTTIVFFLDE…HINDVMLRRY (315 aa)). The stretch at 586-659 (NIEIYEKRVQ…LDKLKSLCDE (74 aa)) forms a coiled coil. The interval 675–704 (ETRLKSGQGQESSNRTGVSGNHFERDTLPT) is disordered. Over residues 679-693 (KSGQGQESSNRTGVS) the composition is skewed to polar residues. A coiled-coil region spans residues 708–799 (VNNSIEMLAK…TRSLNVTEST (92 aa)). In terms of domain architecture, Kinesin motor spans 872-1193 (KIRVFCRLRP…LMYASRVRCI (322 aa)). 953–960 (GQTGSGKT) serves as a coordination point for ATP. The calmodulin-binding stretch occupies residues 1201 to 1223 (VAPKEIMRLKKLIAYWKEQAGKR). The interval 1220–1248 (AGKRSEDDDLEEIQEERTPKEKADNRLTS) is disordered. A compositionally biased stretch (basic and acidic residues) spans 1234–1248 (EERTPKEKADNRLTS).

This sequence belongs to the TRAFAC class myosin-kinesin ATPase superfamily. Kinesin family. KIN-14 subfamily. In terms of assembly, binds microtubules via its N-terminus containing the MyTH4 domain and binds F-actin via its FERM domain. Binding to calmodulin inhibits microtubule binding activity.

It is found in the cytoplasm. The protein localises to the cytoskeleton. In terms of biological role, minus-end microtubule-dependent motor protein involved in the regulation of cell division. In Oryza sativa subsp. japonica (Rice), this protein is Kinesin-like protein KIN-14I.